The following is an 80-amino-acid chain: MASFKLWVCLILLLLEFSVHQCRPLVAEESPSDSGNIRKIMRELLKRSEELKVRSKDGQTVLGTLDSKRLSPGGPDPRHH.

The N-terminal stretch at 1 to 22 (MASFKLWVCLILLLLEFSVHQC) is a signal peptide. The disordered stretch occupies residues 55–80 (SKDGQTVLGTLDSKRLSPGGPDPRHH). Hydroxyproline occurs at positions 72 and 75. P75 is a glycosylation site (O-linked (Ara...) hydroxyproline).

The protein belongs to the CLV3/ESR signal peptide family. The O-glycosylation (arabinosylation) of the hydroxyproline Pro-75 enhances binding affinity of the CLE4p peptide for its receptor. Expressed in roots and seedlings.

It is found in the secreted. Its subcellular location is the extracellular space. Extracellular signal peptide that regulates cell fate. The chain is CLAVATA3/ESR (CLE)-related protein 4 from Arabidopsis thaliana (Mouse-ear cress).